Here is a 499-residue protein sequence, read N- to C-terminus: Phenylalanine--tRNA ligase alpha subunit (499 aa).

L-phenylalanine contacts are provided by residues T333, 372 to 374, and Y412; that span reads QIE. Residue E414 coordinates Mg(2+). F436 lines the L-phenylalanine pocket.

The protein belongs to the class-II aminoacyl-tRNA synthetase family. Phe-tRNA synthetase alpha subunit type 2 subfamily. Tetramer of two alpha and two beta subunits. Mg(2+) is required as a cofactor.

The protein resides in the cytoplasm. The enzyme catalyses tRNA(Phe) + L-phenylalanine + ATP = L-phenylalanyl-tRNA(Phe) + AMP + diphosphate + H(+). This is Phenylalanine--tRNA ligase alpha subunit from Thermoplasma acidophilum (strain ATCC 25905 / DSM 1728 / JCM 9062 / NBRC 15155 / AMRC-C165).